The sequence spans 99 residues: MRKITIRALLLCSLLLVFHTSAAAELQAQEGHLMIPGDTDTALETVDDERFFECTFECDIKKEGKPCKPKGCKCDDKDNKDHKKCSGGWRCKLKLCLKF.

An N-terminal signal peptide occupies residues 1–23 (MRKITIRALLLCSLLLVFHTSAA). Positions 24-50 (AELQAQEGHLMIPGDTDTALETVDDER) are excised as a propeptide. 4 disulfides stabilise this stretch: C54-C67, C58-C91, C72-C74, and C85-C96.

The protein belongs to the neurotoxin 12 (Hwtx-2) family. 04 (lasiotoxin) subfamily. As to expression, expressed by the venom gland.

Its subcellular location is the secreted. Toxin that causes irreversible contractile paralysis into adult Aedes aegypti resulting in 100% mortality after 24 hours. In Lasiodora sp. (strain IBSP 8539) (Brazilian salmon pink birdeater), this protein is U1-theraphotoxin-Lsp1c.